Here is a 221-residue protein sequence, read N- to C-terminus: Imidazoleglycerol-phosphate dehydratase (221 aa).

It belongs to the imidazoleglycerol-phosphate dehydratase family.

The enzyme catalyses D-erythro-1-(imidazol-4-yl)glycerol 3-phosphate = 3-(imidazol-4-yl)-2-oxopropyl phosphate + H2O. It functions in the pathway amino-acid biosynthesis; L-histidine biosynthesis; L-histidine from 5-phospho-alpha-D-ribose 1-diphosphate: step 6/9. This is Imidazoleglycerol-phosphate dehydratase (HIS3) from Kluyveromyces marxianus (Yeast).